Consider the following 162-residue polypeptide: Putative 4-hydroxy-4-methyl-2-oxoglutarate aldolase (162 aa).

Substrate contacts are provided by residues 75-78 (GDML) and Arg-97. Position 98 (Asp-98) interacts with a divalent metal cation.

Belongs to the class II aldolase/RraA-like family. Homotrimer. Requires a divalent metal cation as cofactor.

The catalysed reaction is 4-hydroxy-4-methyl-2-oxoglutarate = 2 pyruvate. The enzyme catalyses oxaloacetate + H(+) = pyruvate + CO2. Functionally, catalyzes the aldol cleavage of 4-hydroxy-4-methyl-2-oxoglutarate (HMG) into 2 molecules of pyruvate. Also contains a secondary oxaloacetate (OAA) decarboxylase activity due to the common pyruvate enolate transition state formed following C-C bond cleavage in the retro-aldol and decarboxylation reactions. The sequence is that of Putative 4-hydroxy-4-methyl-2-oxoglutarate aldolase from Ectopseudomonas mendocina (strain ymp) (Pseudomonas mendocina).